A 185-amino-acid polypeptide reads, in one-letter code: Ribosome-recycling factor (185 aa).

This sequence belongs to the RRF family.

The protein resides in the cytoplasm. Functionally, responsible for the release of ribosomes from messenger RNA at the termination of protein biosynthesis. May increase the efficiency of translation by recycling ribosomes from one round of translation to another. This chain is Ribosome-recycling factor, found in Acidothermus cellulolyticus (strain ATCC 43068 / DSM 8971 / 11B).